The sequence spans 89 residues: Large ribosomal subunit protein bL27 (89 aa).

The tract at residues 1-22 (MAHKKAGGSSRNGRDSESKRLG) is disordered.

It belongs to the bacterial ribosomal protein bL27 family.

This Bartonella henselae (strain ATCC 49882 / DSM 28221 / CCUG 30454 / Houston 1) (Rochalimaea henselae) protein is Large ribosomal subunit protein bL27.